The chain runs to 154 residues: Methylglyoxal synthase (154 aa).

Residues 6–154 enclose the MGS-like domain; that stretch reads SPLPANKAIA…AYMARRAQGN (149 aa). Residues histidine 19, lysine 23, 45–48, and 65–66 contribute to the substrate site; these read TGTT and SG. Aspartate 71 functions as the Proton donor/acceptor in the catalytic mechanism. Histidine 98 is a substrate binding site.

The protein belongs to the methylglyoxal synthase family.

The enzyme catalyses dihydroxyacetone phosphate = methylglyoxal + phosphate. Its function is as follows. Catalyzes the formation of methylglyoxal from dihydroxyacetone phosphate. This is Methylglyoxal synthase from Cellvibrio japonicus (strain Ueda107) (Pseudomonas fluorescens subsp. cellulosa).